The chain runs to 412 residues: Multifunctional CCA protein (412 aa).

ATP-binding residues include Gly8 and Arg11. 2 residues coordinate CTP: Gly8 and Arg11. Mg(2+)-binding residues include Asp21 and Asp23. Residues Arg91, Arg137, and Arg140 each coordinate ATP. CTP is bound by residues Arg91, Arg137, and Arg140. The HD domain maps to 228-329 (TGIHTLMTLS…VKLFDSIDAW (102 aa)).

The protein belongs to the tRNA nucleotidyltransferase/poly(A) polymerase family. Bacterial CCA-adding enzyme type 1 subfamily. Monomer. Can also form homodimers and oligomers. Requires Mg(2+) as cofactor. Ni(2+) serves as cofactor.

It catalyses the reaction a tRNA precursor + 2 CTP + ATP = a tRNA with a 3' CCA end + 3 diphosphate. The enzyme catalyses a tRNA with a 3' CCA end + 2 CTP + ATP = a tRNA with a 3' CCACCA end + 3 diphosphate. Functionally, catalyzes the addition and repair of the essential 3'-terminal CCA sequence in tRNAs without using a nucleic acid template. Adds these three nucleotides in the order of C, C, and A to the tRNA nucleotide-73, using CTP and ATP as substrates and producing inorganic pyrophosphate. tRNA 3'-terminal CCA addition is required both for tRNA processing and repair. Also involved in tRNA surveillance by mediating tandem CCA addition to generate a CCACCA at the 3' terminus of unstable tRNAs. While stable tRNAs receive only 3'-terminal CCA, unstable tRNAs are marked with CCACCA and rapidly degraded. The polypeptide is Multifunctional CCA protein (Escherichia coli (strain SMS-3-5 / SECEC)).